The sequence spans 192 residues: dTTP/UTP pyrophosphatase (192 aa).

Residue aspartate 65 is the Proton acceptor of the active site.

It belongs to the Maf family. YhdE subfamily. A divalent metal cation serves as cofactor.

Its subcellular location is the cytoplasm. It catalyses the reaction dTTP + H2O = dTMP + diphosphate + H(+). The enzyme catalyses UTP + H2O = UMP + diphosphate + H(+). Nucleoside triphosphate pyrophosphatase that hydrolyzes dTTP and UTP. May have a dual role in cell division arrest and in preventing the incorporation of modified nucleotides into cellular nucleic acids. This is dTTP/UTP pyrophosphatase from Fusobacterium nucleatum subsp. nucleatum (strain ATCC 25586 / DSM 15643 / BCRC 10681 / CIP 101130 / JCM 8532 / KCTC 2640 / LMG 13131 / VPI 4355).